The primary structure comprises 98 residues: U-scoloptoxin(16)-Er9a (98 aa).

The signal sequence occupies residues 1–24; sequence MVSYLCMSVSSGWLSIGKIAIKDG.

Belongs to the scoloptoxin-16 family. Contains 4 disulfide bonds. In terms of tissue distribution, expressed by the venom gland.

Its subcellular location is the secreted. In Ethmostigmus rubripes (Giant centipede), this protein is U-scoloptoxin(16)-Er9a.